The primary structure comprises 153 residues: UPF0178 protein Sfum_1097 (153 aa).

Belongs to the UPF0178 family.

The protein is UPF0178 protein Sfum_1097 of Syntrophobacter fumaroxidans (strain DSM 10017 / MPOB).